We begin with the raw amino-acid sequence, 317 residues long: Aspartate carbamoyltransferase catalytic subunit (317 aa).

Positions 64 and 65 each coordinate carbamoyl phosphate. Lys-92 is an L-aspartate binding site. Positions 114, 142, and 145 each coordinate carbamoyl phosphate. 2 residues coordinate L-aspartate: Arg-176 and Arg-230. Residues Gly-271 and Pro-272 each contribute to the carbamoyl phosphate site.

It belongs to the aspartate/ornithine carbamoyltransferase superfamily. ATCase family. As to quaternary structure, heterododecamer (2C3:3R2) of six catalytic PyrB chains organized as two trimers (C3), and six regulatory PyrI chains organized as three dimers (R2).

The catalysed reaction is carbamoyl phosphate + L-aspartate = N-carbamoyl-L-aspartate + phosphate + H(+). It participates in pyrimidine metabolism; UMP biosynthesis via de novo pathway; (S)-dihydroorotate from bicarbonate: step 2/3. Catalyzes the condensation of carbamoyl phosphate and aspartate to form carbamoyl aspartate and inorganic phosphate, the committed step in the de novo pyrimidine nucleotide biosynthesis pathway. This is Aspartate carbamoyltransferase catalytic subunit from Nitratidesulfovibrio vulgaris (strain DP4) (Desulfovibrio vulgaris).